Reading from the N-terminus, the 670-residue chain is Methionine--tRNA ligase (670 aa).

Positions 14 to 24 (PYANGHLHLGH) match the 'HIGH' region motif. The Zn(2+) site is built by Cys145, Cys148, Cys158, and Cys161. Positions 330-334 (KMSKS) match the 'KMSKS' region motif. An ATP-binding site is contributed by Lys333. A tRNA-binding domain is found at 570–670 (DFAKVDLRIA…AGALPGMKVK (101 aa)).

The protein belongs to the class-I aminoacyl-tRNA synthetase family. MetG type 1 subfamily. As to quaternary structure, homodimer. Requires Zn(2+) as cofactor.

The protein localises to the cytoplasm. It catalyses the reaction tRNA(Met) + L-methionine + ATP = L-methionyl-tRNA(Met) + AMP + diphosphate. In terms of biological role, is required not only for elongation of protein synthesis but also for the initiation of all mRNA translation through initiator tRNA(fMet) aminoacylation. This Legionella pneumophila (strain Paris) protein is Methionine--tRNA ligase.